Consider the following 474-residue polypeptide: tRNA-2-methylthio-N(6)-dimethylallyladenosine synthase (474 aa).

The MTTase N-terminal domain maps to 3–120 (QKLHIKTWGC…LPEMINQIRA (118 aa)). Positions 12, 49, 83, 157, 161, and 164 each coordinate [4Fe-4S] cluster. The 233-residue stretch at 143–375 (KAEGPTAFVS…QQRINNQAAQ (233 aa)) folds into the Radical SAM core domain. Positions 378–441 (RAMLGTEQRV…TNSLRGDVVR (64 aa)) constitute a TRAM domain.

Belongs to the methylthiotransferase family. MiaB subfamily. As to quaternary structure, monomer. Requires [4Fe-4S] cluster as cofactor.

The protein resides in the cytoplasm. It carries out the reaction N(6)-dimethylallyladenosine(37) in tRNA + (sulfur carrier)-SH + AH2 + 2 S-adenosyl-L-methionine = 2-methylsulfanyl-N(6)-dimethylallyladenosine(37) in tRNA + (sulfur carrier)-H + 5'-deoxyadenosine + L-methionine + A + S-adenosyl-L-homocysteine + 2 H(+). Catalyzes the methylthiolation of N6-(dimethylallyl)adenosine (i(6)A), leading to the formation of 2-methylthio-N6-(dimethylallyl)adenosine (ms(2)i(6)A) at position 37 in tRNAs that read codons beginning with uridine. The polypeptide is tRNA-2-methylthio-N(6)-dimethylallyladenosine synthase (Mannheimia succiniciproducens (strain KCTC 0769BP / MBEL55E)).